The following is a 555-amino-acid chain: Developmental and secondary metabolism regulator veA (555 aa).

Disordered stretches follow at residues 1–23 (MATR…RITR), 39–60 (ERAR…VDPP), and 234–533 (RRRG…TLLS). The segment covering 13 to 23 (ETEHSVSRITR) has biased composition (basic and acidic residues). Residues 25–228 (GKRITYKLNV…AEQGCRVRIR (204 aa)) enclose the Velvet domain. The short motif at 39 to 44 (ERARAC) is the Nuclear localization signal element. The span at 239–258 (KRSDDYDFDEERSHRGRIPD) shows a compositional bias: basic and acidic residues. Positions 311–331 (AIPPAPAPAPPSSSTPTPVAP) are enriched in pro residues. 2 stretches are compositionally biased toward polar residues: residues 336-372 (RSSS…TQVY) and 380-389 (HARNPSTSTE). Positions 439–479 (QTPSNAAPSLPPIASISAEYSNNLPQPPSNLAPSPNREPRG) are PEST. Basic and acidic residues-rich tracts occupy residues 492-503 (RPHEDAFSHSER) and 519-533 (ADRR…TLLS).

It belongs to the velvet family. VeA subfamily. As to quaternary structure, component of the heterotrimeric velvet complex composed of laeA, veA and velB; VeA acting as a bridging protein between laeA and velB.

It is found in the nucleus. The protein localises to the cytoplasm. In terms of biological role, component of the velvet transcription factor complex that controls sexual/asexual developmental ratio in response to light, promoting sexual development in the darkness while stimulating asexual sporulation under illumination. The velvet complex hat acts as a global regulator for secondary metabolite gene expression. Increases spore dispersing capacity by impacting conidiophore architecture. This is Developmental and secondary metabolism regulator veA from Aspergillus niger (strain ATCC 1015 / CBS 113.46 / FGSC A1144 / LSHB Ac4 / NCTC 3858a / NRRL 328 / USDA 3528.7).